Here is a 340-residue protein sequence, read N- to C-terminus: Ketol-acid reductoisomerase (NADP(+)) (340 aa).

One can recognise a KARI N-terminal Rossmann domain in the interval 1-182 (MRVYYDRDCD…GGGRSGIIET (182 aa)). Residues 24–27 (YGSQ), arginine 48, serine 51, serine 53, and 83–86 (DELQ) contribute to the NADP(+) site. Histidine 108 is a catalytic residue. An NADP(+)-binding site is contributed by glycine 134. The region spanning 183 to 329 (NFRQECETDL…EKLRGMMPWI (147 aa)) is the KARI C-terminal knotted domain. Mg(2+) is bound by residues aspartate 191, glutamate 195, glutamate 227, and glutamate 231. Serine 252 serves as a coordination point for substrate.

This sequence belongs to the ketol-acid reductoisomerase family. Mg(2+) serves as cofactor.

The catalysed reaction is (2R)-2,3-dihydroxy-3-methylbutanoate + NADP(+) = (2S)-2-acetolactate + NADPH + H(+). The enzyme catalyses (2R,3R)-2,3-dihydroxy-3-methylpentanoate + NADP(+) = (S)-2-ethyl-2-hydroxy-3-oxobutanoate + NADPH + H(+). It participates in amino-acid biosynthesis; L-isoleucine biosynthesis; L-isoleucine from 2-oxobutanoate: step 2/4. Its pathway is amino-acid biosynthesis; L-valine biosynthesis; L-valine from pyruvate: step 2/4. Its function is as follows. Involved in the biosynthesis of branched-chain amino acids (BCAA). Catalyzes an alkyl-migration followed by a ketol-acid reduction of (S)-2-acetolactate (S2AL) to yield (R)-2,3-dihydroxy-isovalerate. In the isomerase reaction, S2AL is rearranged via a Mg-dependent methyl migration to produce 3-hydroxy-3-methyl-2-ketobutyrate (HMKB). In the reductase reaction, this 2-ketoacid undergoes a metal-dependent reduction by NADPH to yield (R)-2,3-dihydroxy-isovalerate. This is Ketol-acid reductoisomerase (NADP(+)) from Cereibacter sphaeroides (strain ATCC 17025 / ATH 2.4.3) (Rhodobacter sphaeroides).